The primary structure comprises 490 residues: Doublesex- and mab-3-related transcription factor A1 (490 aa).

The span at 1 to 13 shows a compositional bias: basic and acidic residues; that stretch reads MERLPHGRRDRSG. The segment at 1–31 is disordered; sequence MERLPHGRRDRSGGCRPHLAPGRAAAPASAA. Low complexity predominate over residues 20–31; that stretch reads APGRAAAPASAA. Residues 86-133 constitute a DNA-binding region (DM); the sequence is CARCRNHGVVSALKGHKRFCRWRDCACAKCTLIAERQRVMAAQVALRR. 2 disordered regions span residues 152 to 171 and 207 to 289; these read GSSG…ESPQ and DRKQ…DLES. A compositionally biased stretch (basic and acidic residues) spans 207 to 216; the sequence is DRKQEPKQRN. Composition is skewed to polar residues over residues 217–242 and 269–289; these read CESC…SKGN and PTDQ…DLES. The 36-residue stretch at 314–349 folds into the DMA domain; sequence RDPLGILTRIFPGYKHSRLEGILQFCKGDVVQAIEQ.

It belongs to the DMRT family. Widely expressed, with highest levels in ovary, testis, epididymis, preputial gland, vomeronasal organ, liver, salivary glands and heart. Also expressed throughout the brain with highest levels in the olfactory bulbs and medulla. Detected at similar levels in gonads of both sexes.

The protein localises to the nucleus. In Mus musculus (Mouse), this protein is Doublesex- and mab-3-related transcription factor A1 (Dmrta1).